The primary structure comprises 639 residues: Chaperone protein DnaK (639 aa).

Thr197 bears the Phosphothreonine; by autocatalysis mark. Basic and acidic residues-rich tracts occupy residues 514 to 529 (AEEN…DLVE) and 540 to 553 (GTEK…EKVD). Disordered regions lie at residues 514–554 (AEEN…KVDP) and 603–639 (DKAE…RKRG). The segment covering 612 to 633 (APEEEERGVDEDIVDADFEDLD) has biased composition (acidic residues).

Belongs to the heat shock protein 70 family.

Its function is as follows. Acts as a chaperone. The sequence is that of Chaperone protein DnaK from Jannaschia sp. (strain CCS1).